Consider the following 255-residue polypeptide: Imidazole glycerol phosphate synthase subunit HisF (255 aa).

Catalysis depends on residues D12 and D131.

This sequence belongs to the HisA/HisF family. Heterodimer of HisH and HisF.

The protein localises to the cytoplasm. It catalyses the reaction 5-[(5-phospho-1-deoxy-D-ribulos-1-ylimino)methylamino]-1-(5-phospho-beta-D-ribosyl)imidazole-4-carboxamide + L-glutamine = D-erythro-1-(imidazol-4-yl)glycerol 3-phosphate + 5-amino-1-(5-phospho-beta-D-ribosyl)imidazole-4-carboxamide + L-glutamate + H(+). Its pathway is amino-acid biosynthesis; L-histidine biosynthesis; L-histidine from 5-phospho-alpha-D-ribose 1-diphosphate: step 5/9. Functionally, IGPS catalyzes the conversion of PRFAR and glutamine to IGP, AICAR and glutamate. The HisF subunit catalyzes the cyclization activity that produces IGP and AICAR from PRFAR using the ammonia provided by the HisH subunit. This Zymomonas mobilis subsp. mobilis (strain ATCC 31821 / ZM4 / CP4) protein is Imidazole glycerol phosphate synthase subunit HisF.